Reading from the N-terminus, the 182-residue chain is Dirigent protein 1 (182 aa).

A signal peptide spans Met1–Ala24. Residue Asn125 is glycosylated (N-linked (GlcNAc...) asparagine).

The protein belongs to the plant dirigent protein family. In terms of assembly, homodimer.

The protein resides in the secreted. The protein localises to the extracellular space. Its subcellular location is the apoplast. In terms of biological role, dirigent proteins impart stereoselectivity on the phenoxy radical-coupling reaction, yielding optically active lignans from two molecules of coniferyl alcohol in the biosynthesis of lignans, flavonolignans, and alkaloids and thus plays a central role in plant secondary metabolism. The polypeptide is Dirigent protein 1 (DIR1) (Arabidopsis thaliana (Mouse-ear cress)).